Here is a 221-residue protein sequence, read N- to C-terminus: ATP synthase subunit delta (221 aa).

The span at 1-13 shows a compositional bias: basic and acidic residues; the sequence is MGPVPEEHQRESE. The segment at 1–31 is disordered; the sequence is MGPVPEEHQRESETVASNGANESGAAVTGIP.

It belongs to the ATPase delta chain family. In terms of assembly, F-type ATPases have 2 components, F(1) - the catalytic core - and F(0) - the membrane proton channel. F(1) has five subunits: alpha(3), beta(3), gamma(1), delta(1), epsilon(1). F(0) has three main subunits: a(1), b(2) and c(10-14). The alpha and beta chains form an alternating ring which encloses part of the gamma chain. F(1) is attached to F(0) by a central stalk formed by the gamma and epsilon chains, while a peripheral stalk is formed by the delta and b chains.

Its subcellular location is the cell inner membrane. Functionally, f(1)F(0) ATP synthase produces ATP from ADP in the presence of a proton or sodium gradient. F-type ATPases consist of two structural domains, F(1) containing the extramembraneous catalytic core and F(0) containing the membrane proton channel, linked together by a central stalk and a peripheral stalk. During catalysis, ATP synthesis in the catalytic domain of F(1) is coupled via a rotary mechanism of the central stalk subunits to proton translocation. In terms of biological role, this protein is part of the stalk that links CF(0) to CF(1). It either transmits conformational changes from CF(0) to CF(1) or is implicated in proton conduction. In Granulibacter bethesdensis (strain ATCC BAA-1260 / CGDNIH1), this protein is ATP synthase subunit delta.